We begin with the raw amino-acid sequence, 461 residues long: Bifunctional protein GlmU (461 aa).

The interval 1-232 (MNLQIIILAA…SFEVQGINNR (232 aa)) is pyrophosphorylase. UDP-N-acetyl-alpha-D-glucosamine-binding positions include 8–11 (LAAG), K22, Q73, and 78–79 (GT). D102 is a Mg(2+) binding site. 3 residues coordinate UDP-N-acetyl-alpha-D-glucosamine: G142, E157, and N230. N230 provides a ligand contact to Mg(2+). The interval 233-253 (QQLQQLERTWQQRAANQLMEK) is linker. The interval 254–461 (GATLADANRF…WKRPVKRERD (208 aa)) is N-acetyltransferase. UDP-N-acetyl-alpha-D-glucosamine contacts are provided by R336 and K354. The Proton acceptor role is filled by H366. Residues Y369 and N380 each coordinate UDP-N-acetyl-alpha-D-glucosamine. Acetyl-CoA contacts are provided by residues A383, 389-390 (NY), S408, and A426.

This sequence in the N-terminal section; belongs to the N-acetylglucosamine-1-phosphate uridyltransferase family. It in the C-terminal section; belongs to the transferase hexapeptide repeat family. Homotrimer. Requires Mg(2+) as cofactor.

The protein resides in the cytoplasm. The enzyme catalyses alpha-D-glucosamine 1-phosphate + acetyl-CoA = N-acetyl-alpha-D-glucosamine 1-phosphate + CoA + H(+). It carries out the reaction N-acetyl-alpha-D-glucosamine 1-phosphate + UTP + H(+) = UDP-N-acetyl-alpha-D-glucosamine + diphosphate. Its pathway is nucleotide-sugar biosynthesis; UDP-N-acetyl-alpha-D-glucosamine biosynthesis; N-acetyl-alpha-D-glucosamine 1-phosphate from alpha-D-glucosamine 6-phosphate (route II): step 2/2. It functions in the pathway nucleotide-sugar biosynthesis; UDP-N-acetyl-alpha-D-glucosamine biosynthesis; UDP-N-acetyl-alpha-D-glucosamine from N-acetyl-alpha-D-glucosamine 1-phosphate: step 1/1. The protein operates within bacterial outer membrane biogenesis; LPS lipid A biosynthesis. Functionally, catalyzes the last two sequential reactions in the de novo biosynthetic pathway for UDP-N-acetylglucosamine (UDP-GlcNAc). The C-terminal domain catalyzes the transfer of acetyl group from acetyl coenzyme A to glucosamine-1-phosphate (GlcN-1-P) to produce N-acetylglucosamine-1-phosphate (GlcNAc-1-P), which is converted into UDP-GlcNAc by the transfer of uridine 5-monophosphate (from uridine 5-triphosphate), a reaction catalyzed by the N-terminal domain. The sequence is that of Bifunctional protein GlmU from Legionella pneumophila (strain Paris).